The primary structure comprises 216 residues: DNA replication complex GINS protein psf1 (216 aa).

Positions 110–133 are disordered; it reads QTTGGPKGVTEGNEGGGTTSSLSP. Gly residues predominate over residues 111–127; it reads TTGGPKGVTEGNEGGGT.

This sequence belongs to the GINS1/PSF1 family. As to quaternary structure, component of the GINS complex which is a heterotetramer of div-26/sld5, drc-1/psf1, drc-2/psf2 and drc-3/psf3.

Its subcellular location is the nucleus. The GINS complex plays an essential role in the initiation of DNA replication. This chain is DNA replication complex GINS protein psf1 (drc-1), found in Neurospora crassa (strain ATCC 24698 / 74-OR23-1A / CBS 708.71 / DSM 1257 / FGSC 987).